A 207-amino-acid chain; its full sequence is 8-oxoguanine DNA glycosylase/AP lyase (207 aa).

Active-site residues include Lys-128 and Asp-146.

Belongs to the type-2 OGG1 family.

It carries out the reaction 2'-deoxyribonucleotide-(2'-deoxyribose 5'-phosphate)-2'-deoxyribonucleotide-DNA = a 3'-end 2'-deoxyribonucleotide-(2,3-dehydro-2,3-deoxyribose 5'-phosphate)-DNA + a 5'-end 5'-phospho-2'-deoxyribonucleoside-DNA + H(+). Its function is as follows. Catalyzes the excision of an oxidatively damaged form of guanine (7,8-dihydro-8-oxoguanine = 8-oxoG) from DNA. Also cleaves the DNA backbone at apurinic/apyrimidinic sites (AP sites). The polypeptide is 8-oxoguanine DNA glycosylase/AP lyase (Saccharolobus solfataricus (strain ATCC 35092 / DSM 1617 / JCM 11322 / P2) (Sulfolobus solfataricus)).